Consider the following 215-residue polypeptide: UPF0126 membrane protein DR_2368 (215 aa).

6 helical membrane-spanning segments follow: residues 15–35, 39–59, 75–95, 101–121, 123–143, and 162–182; these read LHWL…LLGV, FDLF…GAIR, TYLW…ERLA, LSLF…LGAI, IGLG…GGGI, and LYAT…PHFT.

Belongs to the UPF0126 family.

The protein localises to the cell membrane. The polypeptide is UPF0126 membrane protein DR_2368 (Deinococcus radiodurans (strain ATCC 13939 / DSM 20539 / JCM 16871 / CCUG 27074 / LMG 4051 / NBRC 15346 / NCIMB 9279 / VKM B-1422 / R1)).